The sequence spans 101 residues: Large ribosomal subunit protein uL23 (101 aa).

The protein belongs to the universal ribosomal protein uL23 family. Part of the 50S ribosomal subunit. Contacts protein L29, and trigger factor when it is bound to the ribosome.

Its function is as follows. One of the early assembly proteins it binds 23S rRNA. One of the proteins that surrounds the polypeptide exit tunnel on the outside of the ribosome. Forms the main docking site for trigger factor binding to the ribosome. This is Large ribosomal subunit protein uL23 from Aromatoleum aromaticum (strain DSM 19018 / LMG 30748 / EbN1) (Azoarcus sp. (strain EbN1)).